Consider the following 78-residue polypeptide: Putative Fe(2+) transport protein A (78 aa).

Belongs to the FeoA family.

In terms of biological role, might be involved in Fe(2+) ion uptake. In Helicobacter pylori (strain J99 / ATCC 700824) (Campylobacter pylori J99), this protein is Putative Fe(2+) transport protein A.